We begin with the raw amino-acid sequence, 260 residues long: Purine nucleoside phosphorylase XF_0940 (260 aa).

Residues histidine 79, cysteine 120, and histidine 137 each coordinate Zn(2+).

It belongs to the purine nucleoside phosphorylase YfiH/LACC1 family. As to quaternary structure, homodimer. Requires Cu(2+) as cofactor. Zn(2+) is required as a cofactor.

It catalyses the reaction adenosine + phosphate = alpha-D-ribose 1-phosphate + adenine. The enzyme catalyses S-methyl-5'-thioadenosine + phosphate = 5-(methylsulfanyl)-alpha-D-ribose 1-phosphate + adenine. It carries out the reaction inosine + phosphate = alpha-D-ribose 1-phosphate + hypoxanthine. The catalysed reaction is adenosine + H2O + H(+) = inosine + NH4(+). Functionally, purine nucleoside enzyme that catalyzes the phosphorolysis of adenosine and inosine nucleosides, yielding D-ribose 1-phosphate and the respective free bases, adenine and hypoxanthine. Also catalyzes the phosphorolysis of S-methyl-5'-thioadenosine into adenine and S-methyl-5-thio-alpha-D-ribose 1-phosphate. Also has adenosine deaminase activity. The protein is Purine nucleoside phosphorylase XF_0940 of Xylella fastidiosa (strain 9a5c).